Here is a 229-residue protein sequence, read N- to C-terminus: Transmembrane protein 182 (229 aa).

Residues 1–26 (MRLNIAIFFGALFGALGVLLFLVAFG) form the signal peptide. Residues 27-114 (SDYWLLATEV…SYDSAVIYRG (88 aa)) are Extracellular-facing. Asparagine 47 is a glycosylation site (N-linked (GlcNAc...) asparagine). The tract at residues 49-59 (TFHHEGFFWRC) is interaction with ITGB1. A glycan (N-linked (GlcNAc...) asparagine) is linked at asparagine 102. The helical transmembrane segment at 115-135 (FWAVLMLLGVVAVVIASFLII) threads the bilayer. Over 136-153 (CAAPFASHFLYKAGGGSY) the chain is Cytoplasmic. Residues 154-174 (IAAGILFSLVVMLYVIWVQAV) traverse the membrane as a helical segment. At 175–200 (ADMESYRNMKMKDCLDFTPSVLYGWS) the chain is on the extracellular side. The chain crosses the membrane as a helical span at residues 201-221 (FFLAPAGIFFSLLAGLLFLVV). The Cytoplasmic segment spans residues 222-229 (GWHIQIHH).

It belongs to the TMEM182 family. As to quaternary structure, interacts with ITGB1.

The protein localises to the cell membrane. Functionally, negatively regulates myogenesis and skeletal muscle regeneration via its association with ITGB1. Modulates ITGB1 activation by decreasing ITGB1-LAMB1 interaction and inhibiting ITGB1-mediated intracellular signaling during myogenesis. The chain is Transmembrane protein 182 (TMEM182) from Homo sapiens (Human).